Consider the following 199-residue polypeptide: Large ribosomal subunit protein uL4 (199 aa).

The protein belongs to the universal ribosomal protein uL4 family. In terms of assembly, part of the 50S ribosomal subunit.

Functionally, one of the primary rRNA binding proteins, this protein initially binds near the 5'-end of the 23S rRNA. It is important during the early stages of 50S assembly. It makes multiple contacts with different domains of the 23S rRNA in the assembled 50S subunit and ribosome. In terms of biological role, forms part of the polypeptide exit tunnel. This chain is Large ribosomal subunit protein uL4, found in Aquifex aeolicus (strain VF5).